Here is a 374-residue protein sequence, read N- to C-terminus: PqqA peptide cyclase (374 aa).

Positions 13–230 (VPAPIAMLAE…EAEARLRGTL (218 aa)) constitute a Radical SAM core domain. 3 residues coordinate [4Fe-4S] cluster: C27, C31, and C34.

This sequence belongs to the radical SAM superfamily. PqqE family. As to quaternary structure, interacts with PqqD. The interaction is necessary for activity of PqqE. It depends on [4Fe-4S] cluster as a cofactor.

The enzyme catalyses [PQQ precursor protein] + S-adenosyl-L-methionine = E-Y cross-linked-[PQQ precursor protein] + 5'-deoxyadenosine + L-methionine + H(+). It functions in the pathway cofactor biosynthesis; pyrroloquinoline quinone biosynthesis. Functionally, catalyzes the cross-linking of a glutamate residue and a tyrosine residue in the PqqA protein as part of the biosynthesis of pyrroloquinoline quinone (PQQ). This is PqqA peptide cyclase from Ruegeria pomeroyi (strain ATCC 700808 / DSM 15171 / DSS-3) (Silicibacter pomeroyi).